Reading from the N-terminus, the 172-residue chain is Phosphopantetheine adenylyltransferase (172 aa).

Position 9 (Ser9) interacts with substrate. Residues 9–10 (SF) and His17 contribute to the ATP site. Substrate contacts are provided by Lys41, Leu78, and Arg92. Residues 93-95 (GLR), Glu103, and 128-134 (GRAITST) each bind ATP.

The protein belongs to the bacterial CoaD family. Homohexamer. Mg(2+) serves as cofactor.

The protein resides in the cytoplasm. It catalyses the reaction (R)-4'-phosphopantetheine + ATP + H(+) = 3'-dephospho-CoA + diphosphate. It functions in the pathway cofactor biosynthesis; coenzyme A biosynthesis; CoA from (R)-pantothenate: step 4/5. Reversibly transfers an adenylyl group from ATP to 4'-phosphopantetheine, yielding dephospho-CoA (dPCoA) and pyrophosphate. The protein is Phosphopantetheine adenylyltransferase of Bartonella quintana (strain Toulouse) (Rochalimaea quintana).